The following is an 812-amino-acid chain: DNA replication licensing factor MCM3 (812 aa).

Residue alanine 2 is modified to N-acetylalanine. Position 160 is a phosphoserine (serine 160). Lysine 293 bears the N6-acetyllysine mark. Positions 295 to 502 constitute an MCM domain; sequence VFEQLARSLA…QDREISDHVL (208 aa). Glutamine 353, leucine 393, glutamate 394, alanine 395, and alanine 397 together coordinate ADP. The Arginine finger signature appears at 477–480; sequence SRFD. Lysine 547 bears the N6-acetyllysine mark. Serine 611 carries the phosphoserine modification. An ATP-binding site is contributed by arginine 664. Residues 664–744 are disordered; sequence RKKASEDESD…TQDSQKVELS (81 aa). Residues serine 668, serine 672, and serine 681 each carry the phosphoserine modification. Residues 670–681 show a composition bias toward acidic residues; the sequence is DESDLEDEEEKS. Residue tyrosine 705 is modified to Phosphotyrosine. The residue at position 708 (serine 708) is a Phosphoserine. 3 positions are modified to phosphothreonine: threonine 719, threonine 722, and threonine 729. A compositionally biased stretch (basic and acidic residues) spans 720–744; it reads PKTDDSQEKTDDSQETQDSQKVELS. Phosphoserine is present on residues serine 732 and serine 738.

Belongs to the MCM family. In terms of assembly, component of the MCM2-7 complex. The complex forms a toroidal hexameric ring with the proposed subunit order MCM2-MCM6-MCM4-MCM7-MCM3-MCM5. Component of the CMG helicase complex, a hexameric ring of related MCM2-7 subunits stabilized by CDC45 and the tetrameric GINS complex. Associated with the replication-specific DNA polymerase alpha. Interacts with MCMBP. Interacts with ANKRD17. Interacts with MCM3AP; this interaction leads to MCM3 acetylation. Acetylated by MCM3AP. In terms of processing, O-glycosylated (O-GlcNAcylated), in a cell cycle-dependent manner.

It is found in the nucleus. It localises to the chromosome. The catalysed reaction is ATP + H2O = ADP + phosphate + H(+). Acts as a component of the MCM2-7 complex (MCM complex) which is the replicative helicase essential for 'once per cell cycle' DNA replication initiation and elongation in eukaryotic cells. Core component of CDC45-MCM-GINS (CMG) helicase, the molecular machine that unwinds template DNA during replication, and around which the replisome is built. The active ATPase sites in the MCM2-7 ring are formed through the interaction surfaces of two neighboring subunits such that a critical structure of a conserved arginine finger motif is provided in trans relative to the ATP-binding site of the Walker A box of the adjacent subunit. The six ATPase active sites, however, are likely to contribute differentially to the complex helicase activity. Required for the entry in S phase and for cell division. This chain is DNA replication licensing factor MCM3 (Mcm3), found in Mus musculus (Mouse).